The following is a 282-amino-acid chain: uncharacterized protein (282 aa).

2 disordered regions span residues 1-45 (MPLE…EEDE) and 201-259 (DRRR…KPWG). Basic and acidic residues predominate over residues 10 to 19 (SEMKEFKEST). A compositionally biased stretch (polar residues) spans 26-38 (SVSSEETLTQSMV). Residues 201–237 (DRRRKEDSKARSRLTRREEHSEHHRSGKSRRERERRS) show a composition bias toward basic and acidic residues.

This is an uncharacterized protein from Ostreid herpesvirus 1 (isolate France) (OsHV-1).